Here is a 152-residue protein sequence, read N- to C-terminus: Nucleoside diphosphate kinase (152 aa).

ATP-binding residues include K11, F59, R87, T93, R104, and N114. H117 serves as the catalytic Pros-phosphohistidine intermediate.

The protein belongs to the NDK family. Homotetramer. Requires Mg(2+) as cofactor.

Its subcellular location is the cytoplasm. The catalysed reaction is a 2'-deoxyribonucleoside 5'-diphosphate + ATP = a 2'-deoxyribonucleoside 5'-triphosphate + ADP. It carries out the reaction a ribonucleoside 5'-diphosphate + ATP = a ribonucleoside 5'-triphosphate + ADP. Its function is as follows. Major role in the synthesis of nucleoside triphosphates other than ATP. The ATP gamma phosphate is transferred to the NDP beta phosphate via a ping-pong mechanism, using a phosphorylated active-site intermediate. This is Nucleoside diphosphate kinase from Prochlorococcus marinus (strain MIT 9312).